The chain runs to 158 residues: Methylglyoxal synthase (158 aa).

The region spanning 1–158 (MRRKLRIALV…AFEESLKVKE (158 aa)) is the MGS-like domain. Substrate-binding positions include H12, K16, 38–41 (TGTT), and 63–64 (SG). Catalysis depends on D69, which acts as the Proton donor/acceptor. Residue H96 participates in substrate binding.

The protein belongs to the methylglyoxal synthase family.

The catalysed reaction is dihydroxyacetone phosphate = methylglyoxal + phosphate. In terms of biological role, catalyzes the formation of methylglyoxal from dihydroxyacetone phosphate. In Treponema socranskii, this protein is Methylglyoxal synthase.